The chain runs to 326 residues: 3-methyl-2-oxobutanoate hydroxymethyltransferase 1 (326 aa).

D52, D91, and E122 together coordinate Mg(2+). 3-methyl-2-oxobutanoate contacts are provided by residues 52-53 (DS) and D91. E189 (proton acceptor) is an active-site residue.

It belongs to the PanB family. Homodecamer; pentamer of dimers. Mg(2+) serves as cofactor.

Its subcellular location is the cytoplasm. It catalyses the reaction 3-methyl-2-oxobutanoate + (6R)-5,10-methylene-5,6,7,8-tetrahydrofolate + H2O = 2-dehydropantoate + (6S)-5,6,7,8-tetrahydrofolate. Its pathway is cofactor biosynthesis; (R)-pantothenate biosynthesis; (R)-pantoate from 3-methyl-2-oxobutanoate: step 1/2. Its function is as follows. Catalyzes the reversible reaction in which hydroxymethyl group from 5,10-methylenetetrahydrofolate is transferred onto alpha-ketoisovalerate to form ketopantoate. This Bradyrhizobium diazoefficiens (strain JCM 10833 / BCRC 13528 / IAM 13628 / NBRC 14792 / USDA 110) protein is 3-methyl-2-oxobutanoate hydroxymethyltransferase 1.